Reading from the N-terminus, the 368-residue chain is N-acetylneuraminate epimerase (368 aa).

An N-terminal signal peptide occupies residues 1–19 (MNKTITALTIIMASFATNA). 7 Kelch repeats span residues 40 to 84 (TVYI…AFID), 86 to 137 (NLYV…FVHN), 139 to 173 (KAYV…KINA), 174 to 219 (HYFD…VNKG), 222 to 265 (TWLI…VAGG), 287 to 336 (ENYQ…PWNN), and 338 to 367 (LLII…VTVQ). E228 functions as the Proton acceptor in the catalytic mechanism.

It belongs to the NanM family. As to quaternary structure, homodimer.

The protein localises to the periplasm. The catalysed reaction is N-acetyl-alpha-neuraminate = N-acetyl-beta-neuraminate. Functionally, converts alpha-N-acetylneuranimic acid (Neu5Ac) to the beta-anomer, accelerating the equilibrium between the alpha- and beta-anomers. Probably facilitates sialidase-negative bacteria to compete successfully for limited amounts of extracellular Neu5Ac, which is likely taken up in the beta-anomer. In addition, the rapid removal of sialic acid from solution might be advantageous to the bacterium to damp down host responses. This Escherichia coli O1:K1 / APEC protein is N-acetylneuraminate epimerase.